The chain runs to 380 residues: Endo-chitosanase C (380 aa).

An N-terminal signal peptide occupies residues 1–22; that stretch reads MPIKSFASRLALSLAICGTAMG. The stretch at 276 to 304 is one R3-1 repeat; that stretch reads CSWPGHCAGATCSSNDDCSDDLTCQNGKC. The stretch at 311-341 is one R3-2 repeat; sequence ETCSWEGHCKGATCSSNDDCSDELACISGIC. An R3-3 repeat occupies 348-378; it reads ETCEWEGHCEGASCSSHDDCDGNLACKNGKC.

It belongs to the glycosyl hydrolase 75 family.

Its subcellular location is the secreted. The catalysed reaction is Endohydrolysis of beta-(1-&gt;4)-linkages between D-glucosamine residues in a partly acetylated chitosan.. In terms of biological role, chitosanase catalyzing the endo-type cleavage of chitosan, the deacylated form of chitin. Chitosanase may be crucial in the degradation of the deacetylated portion of chitin in the fungal cell wall. Chitoolisaccharides produced by the hydrolysis of partially N-acetylated chitosan are known to have many biological activities, including antibacterial activity, immune-enhancing effects, and elicitor activity. This Aspergillus oryzae (Yellow koji mold) protein is Endo-chitosanase C (csnC).